A 156-amino-acid chain; its full sequence is Small ribosomal subunit protein uS7 (156 aa).

It belongs to the universal ribosomal protein uS7 family. Part of the 30S ribosomal subunit. Contacts proteins S9 and S11.

One of the primary rRNA binding proteins, it binds directly to 16S rRNA where it nucleates assembly of the head domain of the 30S subunit. Is located at the subunit interface close to the decoding center, probably blocks exit of the E-site tRNA. This chain is Small ribosomal subunit protein uS7, found in Haemophilus influenzae (strain 86-028NP).